The primary structure comprises 664 residues: Zinc finger protein 710 (664 aa).

Residues K110 and K113 each participate in a glycyl lysine isopeptide (Lys-Gly) (interchain with G-Cter in SUMO2) cross-link. The segment at 121-141 (VYEVSVPGDDKDAGPAEAPAE) is disordered. 3 consecutive C2H2-type zinc fingers follow at residues 295-317 (WQCR…ILGH), 323-345 (HSCP…LLTH), and 351-373 (HKCQ…MLLH). K377 is covalently cross-linked (Glycyl lysine isopeptide (Lys-Gly) (interchain with G-Cter in SUMO2)). 8 C2H2-type zinc fingers span residues 379 to 401 (YSCH…EVKH), 407 to 429 (HVCV…LASH), 435 to 457 (YQCL…MLKH), 463 to 485 (FVCT…SLTH), 491 to 513 (FKCE…MLIH), 519 to 541 (YQCH…MIVH), 547 to 569 (FKCK…MHLH), and 575 to 598 (FKCP…KVKH).

This sequence belongs to the krueppel C2H2-type zinc-finger protein family.

It localises to the nucleus. In terms of biological role, may be involved in transcriptional regulation. The protein is Zinc finger protein 710 (ZNF710) of Homo sapiens (Human).